A 321-amino-acid polypeptide reads, in one-letter code: Endochitinase 1 (321 aa).

The N-terminal stretch at 1–21 (MSFRALSVFSLFLSYLILGSA) is a signal peptide. The Chitin-binding type-1 domain occupies 22 to 64 (EQCGRQAGGALCPGGLCCSQFGWCGNTDDYCKKENGCQSQCSG). 7 disulfides stabilise this stretch: cysteine 24-cysteine 39, cysteine 33-cysteine 45, cysteine 38-cysteine 52, cysteine 58-cysteine 62, cysteine 93-cysteine 156, cysteine 167-cysteine 175, and cysteine 274-cysteine 306. The segment at 65 to 98 (SGGDTGGLDSLITRERFDQMLLHRNDGGCPARGF) is hinge. The tract at residues 99–321 (YTYDAFIAAA…YNNGPSVDSM (223 aa)) is catalytic. Catalysis depends on glutamate 137, which acts as the Proton donor.

Belongs to the glycosyl hydrolase 19 family. Chitinase class I subfamily.

Its subcellular location is the vacuole. The enzyme catalyses Random endo-hydrolysis of N-acetyl-beta-D-glucosaminide (1-&gt;4)-beta-linkages in chitin and chitodextrins.. Defense against chitin-containing fungal pathogens. This Theobroma cacao (Cacao) protein is Endochitinase 1 (CHIA1).